The following is a 141-amino-acid chain: Nucleoside diphosphate kinase (141 aa).

Positions 11, 59, 87, 93, 104, and 114 each coordinate ATP. The active-site Pros-phosphohistidine intermediate is H117.

It belongs to the NDK family. As to quaternary structure, homotetramer. Requires Mg(2+) as cofactor.

It localises to the cytoplasm. The catalysed reaction is a 2'-deoxyribonucleoside 5'-diphosphate + ATP = a 2'-deoxyribonucleoside 5'-triphosphate + ADP. It carries out the reaction a ribonucleoside 5'-diphosphate + ATP = a ribonucleoside 5'-triphosphate + ADP. Major role in the synthesis of nucleoside triphosphates other than ATP. The ATP gamma phosphate is transferred to the NDP beta phosphate via a ping-pong mechanism, using a phosphorylated active-site intermediate. The polypeptide is Nucleoside diphosphate kinase (Alkalilimnicola ehrlichii (strain ATCC BAA-1101 / DSM 17681 / MLHE-1)).